The following is a 402-amino-acid chain: Subtilisin-like protease 9 (402 aa).

The signal sequence occupies residues 1 to 20 (MGFFRQLFSLSLCALSLAIP). Positions 21 to 120 (SKLIGLENTQ…VEVDRVVKLD (100 aa)) are excised as a propeptide. One can recognise an Inhibitor I9 domain in the interval 36-119 (SYIVVMKSTI…YVEVDRVVKL (84 aa)). The Peptidase S8 domain maps to 130 to 402 (SWGLGRISHK…RKLLYNGSGA (273 aa)). Catalysis depends on charge relay system residues D162 and H193. The N-linked (GlcNAc...) asparagine glycan is linked to N254. Residue S348 is the Charge relay system of the active site. 2 N-linked (GlcNAc...) asparagine glycosylation sites follow: N390 and N398.

Belongs to the peptidase S8 family.

The protein localises to the secreted. Secreted subtilisin-like serine protease with keratinolytic activity that contributes to pathogenicity. The sequence is that of Subtilisin-like protease 9 (SUB9) from Arthroderma benhamiae (strain ATCC MYA-4681 / CBS 112371) (Trichophyton mentagrophytes).